The following is a 423-amino-acid chain: Large ribosomal subunit protein mL37 (423 aa).

The N-terminal 29 residues, 1 to 29 (MALASGPARRVLARPWGLGLEGCGVPRRG), are a transit peptide targeting the mitochondrion.

It belongs to the mitochondrion-specific ribosomal protein mL37 family. In terms of assembly, component of the mitochondrial ribosome large subunit (39S) which comprises a 16S rRNA and about 50 distinct proteins.

Its subcellular location is the mitochondrion. The sequence is that of Large ribosomal subunit protein mL37 (MRPL37) from Bos taurus (Bovine).